A 240-amino-acid polypeptide reads, in one-letter code: tRNA (guanine-N(1)-)-methyltransferase (240 aa).

S-adenosyl-L-methionine is bound by residues glycine 111 and isoleucine 130–isoleucine 135.

The protein belongs to the RNA methyltransferase TrmD family. In terms of assembly, homodimer.

It localises to the cytoplasm. The catalysed reaction is guanosine(37) in tRNA + S-adenosyl-L-methionine = N(1)-methylguanosine(37) in tRNA + S-adenosyl-L-homocysteine + H(+). In terms of biological role, specifically methylates guanosine-37 in various tRNAs. The polypeptide is tRNA (guanine-N(1)-)-methyltransferase (Mycoplasma mycoides subsp. mycoides SC (strain CCUG 32753 / NCTC 10114 / PG1)).